Consider the following 213-residue polypeptide: Orotate phosphoribosyltransferase (213 aa).

A 5-phospho-alpha-D-ribose 1-diphosphate-binding site is contributed by Lys26. Residue 34 to 35 coordinates orotate; it reads FF. Residues 72–73, Arg99, Lys100, Lys103, His105, and 124–132 contribute to the 5-phospho-alpha-D-ribose 1-diphosphate site; these read YK and DDVITAGTA. Thr128 and Arg156 together coordinate orotate.

The protein belongs to the purine/pyrimidine phosphoribosyltransferase family. PyrE subfamily. As to quaternary structure, homodimer. Mg(2+) serves as cofactor.

It catalyses the reaction orotidine 5'-phosphate + diphosphate = orotate + 5-phospho-alpha-D-ribose 1-diphosphate. Its pathway is pyrimidine metabolism; UMP biosynthesis via de novo pathway; UMP from orotate: step 1/2. Catalyzes the transfer of a ribosyl phosphate group from 5-phosphoribose 1-diphosphate to orotate, leading to the formation of orotidine monophosphate (OMP). This is Orotate phosphoribosyltransferase from Escherichia coli O139:H28 (strain E24377A / ETEC).